The following is a 381-amino-acid chain: Early boundary activity protein 2 (381 aa).

The disordered stretch occupies residues 210–245 (NDAEDVPAPPSKRPRHMSTSSSESHIPDTASEKDEK). The BEN domain maps to 268-365 (PNGTQITAHQ…TKCADTAKKY (98 aa)).

In terms of assembly, the heterotrimeric Elba complex consists of Elba1, Elba2 and Elba3.

The protein resides in the nucleus. In terms of biological role, the heterotrimeric Elba complex is required for chromatin domain boundary function during early embryogenesis. It binds to a 8-bp sequence 5'-CCAATAAG-3' in the Fab-7 insulator or boundary element in the bithorax complex and contributes to its insulator or boundary activity. Elba2 can act as a transcriptional repressor and binds the palindromic sequence 5'-CCAATTGG-3' to mediate transcriptional repression. This is Early boundary activity protein 2 from Drosophila melanogaster (Fruit fly).